The chain runs to 249 residues: 2,3-bisphosphoglycerate-dependent phosphoglycerate mutase (249 aa).

Residues 7–14, 20–21, arginine 59, 86–89, lysine 97, 113–114, and 182–183 each bind substrate; these read RHGESEWN, TG, ERHY, RR, and GN. Residue histidine 8 is the Tele-phosphohistidine intermediate of the active site. Residue glutamate 86 is the Proton donor/acceptor of the active site.

It belongs to the phosphoglycerate mutase family. BPG-dependent PGAM subfamily.

It catalyses the reaction (2R)-2-phosphoglycerate = (2R)-3-phosphoglycerate. The protein operates within carbohydrate degradation; glycolysis; pyruvate from D-glyceraldehyde 3-phosphate: step 3/5. Catalyzes the interconversion of 2-phosphoglycerate and 3-phosphoglycerate. This Lachnoclostridium phytofermentans (strain ATCC 700394 / DSM 18823 / ISDg) (Clostridium phytofermentans) protein is 2,3-bisphosphoglycerate-dependent phosphoglycerate mutase.